We begin with the raw amino-acid sequence, 107 residues long: Putative double-stranded DNA mimic protein HI_1450 (107 aa).

It belongs to the putative dsDNA mimic protein family. In terms of assembly, monomer in solution. Interacts with the DNA-binding protein HU.

Functionally, may act as a double-stranded DNA (dsDNA) mimic. Probably regulates the activity of the DNA-binding protein HU. This is Putative double-stranded DNA mimic protein HI_1450 from Haemophilus influenzae (strain ATCC 51907 / DSM 11121 / KW20 / Rd).